Consider the following 85-residue polypeptide: Large ribosomal subunit protein bL27 (85 aa).

The disordered stretch occupies residues 1–20 (MAHKKAAGSSRNGRDSNPKM).

Belongs to the bacterial ribosomal protein bL27 family.

This is Large ribosomal subunit protein bL27 from Psychrobacter arcticus (strain DSM 17307 / VKM B-2377 / 273-4).